Reading from the N-terminus, the 408-residue chain is Multidrug resistance protein MdtG (408 aa).

11 helical membrane passes run 16 to 36 (LIVA…VMPF), 58 to 78 (IVFS…GGLA), 92 to 112 (LGMG…QFLI), 115 to 135 (ALLG…ATQV), 146 to 166 (TLST…GLLA), 173 to 193 (PVFF…LFCI), 224 to 244 (LFVT…ILTL), 256 to 276 (VAFI…LSAP), 290 to 310 (ILIT…YVQT), 319 to 339 (FLLG…LVYN), and 378 to 398 (AVFL…WNSL).

Belongs to the major facilitator superfamily. DHA1 family. MdtG (TC 2.A.1.2.20) subfamily.

It localises to the cell inner membrane. Its function is as follows. Confers resistance to fosfomycin and deoxycholate. The polypeptide is Multidrug resistance protein MdtG (Escherichia coli O6:K15:H31 (strain 536 / UPEC)).